Reading from the N-terminus, the 100-residue chain is Urease subunit gamma (100 aa).

It belongs to the urease gamma subunit family. As to quaternary structure, heterotrimer of UreA (gamma), UreB (beta) and UreC (alpha) subunits. Three heterotrimers associate to form the active enzyme.

The protein localises to the cytoplasm. It catalyses the reaction urea + 2 H2O + H(+) = hydrogencarbonate + 2 NH4(+). It participates in nitrogen metabolism; urea degradation; CO(2) and NH(3) from urea (urease route): step 1/1. The sequence is that of Urease subunit gamma from Pseudomonas putida (strain W619).